The chain runs to 51 residues: UPF0391 membrane protein PsycPRwf_2202 (51 aa).

The next 2 helical transmembrane spans lie at 6–26 and 27–47; these read IIFA…VAGL and SQNF…IGFI.

The protein belongs to the UPF0391 family.

The protein localises to the cell membrane. The protein is UPF0391 membrane protein PsycPRwf_2202 of Psychrobacter sp. (strain PRwf-1).